We begin with the raw amino-acid sequence, 2196 residues long: Genome polyprotein (2196 aa).

Gly2 is lipidated: N-myristoyl glycine; by host. The Cytoplasmic segment spans residues 2–1506 (GAQVSTQKTG…HVSRAFICLQ (1505 aa)). Residues 568–584 (DLQGDSEHAVESAVSRV) form an amphipathic alpha-helix region. Residues His883 and Asp901 each act as for protease 2A activity in the active site. Zn(2+) is bound by residues Cys918 and Cys920. Cys972 acts as the For protease 2A activity in catalysis. Positions 978 and 980 each coordinate Zn(2+). The membrane-binding stretch occupies residues 1112 to 1184 (NNGWLKKFTE…EQSAPSQSDQ (73 aa)). Residues 1112-1250 (NNGWLKKFTE…SPGAGKSVAT (139 aa)) form an oligomerization region. The interval 1133–1137 (AIKIQ) is RNA-binding. The region spanning 1216–1372 (EKKMSNYIQF…SMYSQNGKIN (157 aa)) is the SF3 helicase domain. Cys1380, Cys1392, and Cys1397 together coordinate Zn(2+). The C4-type; degenerate zinc-finger motif lies at 1380-1397 (CDEECCPVNFKKCCPLVC). The segment at 1424–1431 (EYNHRHSV) is RNA-binding. The tract at residues 1435 to 1440 (LEALFQ) is oligomerization. The stretch at 1507–1522 (ALTTFVSVAGIIYIIY) is an intramembrane region. The Cytoplasmic segment spans residues 1523 to 2196 (KLFAGFQGAY…TLRRKWLDSF (674 aa)). Tyr1532 bears the O-(5'-phospho-RNA)-tyrosine mark. One can recognise a Peptidase C3 domain in the interval 1552-1730 (GPAFEFAVAM…FSAALLKHYF (179 aa)). Residues His1591, Glu1622, and Cys1698 each act as for protease 3C activity in the active site. One can recognise a RdRp catalytic domain in the interval 1961-2077 (GHLIAFDYSG…SYPWPIDASL (117 aa)). Residues Asp1967 and Asp2063 each contribute to the Mg(2+) site.

This sequence belongs to the picornaviruses polyprotein family. In terms of assembly, interacts with capsid protein VP1 and capsid protein VP3 to form heterotrimeric protomers. As to quaternary structure, interacts with capsid protein VP0, and capsid protein VP3 to form heterotrimeric protomers. Five protomers subsequently associate to form pentamers which serve as building blocks for the capsid. Interacts with capsid protein VP2, capsid protein VP3 and capsid protein VP4 following cleavage of capsid protein VP0. Interacts with capsid protein VP1 and capsid protein VP3 in the mature capsid. In terms of assembly, interacts with capsid protein VP0 and capsid protein VP1 to form heterotrimeric protomers. Five protomers subsequently associate to form pentamers which serve as building blocks for the capsid. Interacts with capsid protein VP4 in the mature capsid. Interacts with protein 2C; this interaction may be important for virion morphogenesis. As to quaternary structure, interacts with capsid protein VP1 and capsid protein VP3. Homodimer. In terms of assembly, homohexamer; forms a hexameric ring structure with 6-fold symmetry characteristic of AAA+ ATPases. Interacts (via N-terminus) with host RTN3 (via reticulon domain); this interaction is important for viral replication. Interacts with capsid protein VP3; this interaction may be important for virion morphogenesis. As to quaternary structure, interacts with protein 3CD. Homodimer. Interacts with host GBF1. Interacts (via GOLD domain) with host ACBD3 (via GOLD domain); this interaction allows the formation of a viral protein 3A/ACBD3 heterotetramer with a 2:2 stoichiometry, which will stimulate the recruitment of host PI4KB in order to synthesize PI4P at the viral RNA replication sites. In terms of assembly, interacts with RNA-directed RNA polymerase. As to quaternary structure, interacts with protein 3AB and with RNA-directed RNA polymerase. Interacts with Viral protein genome-linked and with protein 3CD. The cofactor is Mg(2+). Post-translationally, specific enzymatic cleavages in vivo by the viral proteases yield processing intermediates and the mature proteins. In terms of processing, myristoylation is required for the formation of pentamers during virus assembly. Further assembly of 12 pentamers and a molecule of genomic RNA generates the provirion. During virion maturation, immature virions are rendered infectious following cleavage of VP0 into VP4 and VP2. This maturation seems to be an autocatalytic event triggered by the presence of RNA in the capsid and it is followed by a conformational change infectious virion. Post-translationally, myristoylation is required during RNA encapsidation and formation of the mature virus particle. In terms of processing, VPg is uridylylated by the polymerase into VPg-pUpU. This acts as a nucleotide-peptide primer for the genomic RNA replication.

It localises to the virion. It is found in the host cytoplasm. The protein resides in the host cytoplasmic vesicle membrane. The protein localises to the host nucleus. It catalyses the reaction a ribonucleoside 5'-triphosphate + H2O = a ribonucleoside 5'-diphosphate + phosphate + H(+). It carries out the reaction Selective cleavage of Tyr-|-Gly bond in the picornavirus polyprotein.. The catalysed reaction is RNA(n) + a ribonucleoside 5'-triphosphate = RNA(n+1) + diphosphate. The enzyme catalyses Selective cleavage of Gln-|-Gly bond in the poliovirus polyprotein. In other picornavirus reactions Glu may be substituted for Gln, and Ser or Thr for Gly.. Replication or transcription is subject to high level of random mutations by the nucleotide analog ribavirin. Forms an icosahedral capsid of pseudo T=3 symmetry with capsid proteins VP2 and VP3. The capsid is 300 Angstroms in diameter, composed of 60 copies of each capsid protein and enclosing the viral positive strand RNA genome. Capsid protein VP1 mainly forms the vertices of the capsid. Capsid protein VP1 interacts with host cell receptor to provide virion attachment to target host cells. This attachment induces virion internalization. Tyrosine kinases are probably involved in the entry process. After binding to its receptor, the capsid undergoes conformational changes. Capsid protein VP1 N-terminus (that contains an amphipathic alpha-helix) and capsid protein VP4 are externalized. Together, they shape a pore in the host membrane through which viral genome is translocated to host cell cytoplasm. Its function is as follows. Forms an icosahedral capsid of pseudo T=3 symmetry with capsid proteins VP2 and VP3. The capsid is 300 Angstroms in diameter, composed of 60 copies of each capsid protein and enclosing the viral positive strand RNA genome. In terms of biological role, lies on the inner surface of the capsid shell. After binding to the host receptor, the capsid undergoes conformational changes. Capsid protein VP4 is released, Capsid protein VP1 N-terminus is externalized, and together, they shape a pore in the host membrane through which the viral genome is translocated into the host cell cytoplasm. Functionally, component of immature procapsids, which is cleaved into capsid proteins VP4 and VP2 after maturation. Allows the capsid to remain inactive before the maturation step. Cysteine protease that cleaves viral polyprotein and specific host proteins. It is responsible for the autocatalytic cleavage between the P1 and P2 regions, which is the first cleavage occurring in the polyprotein. Also cleaves the host translation initiation factor EIF4G1, in order to shut down the capped cellular mRNA translation. Inhibits the host nucleus-cytoplasm protein and RNA trafficking by cleaving host members of the nuclear pores. Counteracts stress granule formation probably by antagonizing its assembly or promoting its dissassembly. Its function is as follows. Plays an essential role in the virus replication cycle by acting as a viroporin. Creates a pore in the host endoplasmic reticulum and as a consequence releases Ca2+ in the cytoplasm of infected cell. In turn, high levels of cytoplasmic calcium may trigger membrane trafficking and transport of viral ER-associated proteins to viroplasms, sites of viral genome replication. In terms of biological role, induces and associates with structural rearrangements of intracellular membranes. Displays RNA-binding, nucleotide binding and NTPase activities. May play a role in virion morphogenesis and viral RNA encapsidation by interacting with the capsid protein VP3. Functionally, localizes the viral replication complex to the surface of membranous vesicles. Together with protein 3CD binds the Cis-Active RNA Element (CRE) which is involved in RNA synthesis initiation. Acts as a cofactor to stimulate the activity of 3D polymerase, maybe through a nucleid acid chaperone activity. Localizes the viral replication complex to the surface of membranous vesicles. It inhibits host cell endoplasmic reticulum-to-Golgi apparatus transport and causes the disassembly of the Golgi complex, possibly through GBF1 interaction. This would result in depletion of MHC, trail receptors and IFN receptors at the host cell surface. Plays an essential role in viral RNA replication by recruiting ACBD3 and PI4KB at the viral replication sites, thereby allowing the formation of the rearranged membranous structures where viral replication takes place. Its function is as follows. Acts as a primer for viral RNA replication and remains covalently bound to viral genomic RNA. VPg is uridylylated prior to priming replication into VPg-pUpU. The oriI viral genomic sequence may act as a template for this. The VPg-pUpU is then used as primer on the genomic RNA poly(A) by the RNA-dependent RNA polymerase to replicate the viral genome. During genome replication, the VPg-RNA linkage is removed by the host TDP2, thereby accelerating replication. During the late stage of the replication cycle, host TDP2 is excluded from sites of viral RNA synthesis and encapsidation, allowing for the generation of progeny virions. In terms of biological role, involved in the viral replication complex and viral polypeptide maturation. It exhibits protease activity with a specificity and catalytic efficiency that is different from protease 3C. Protein 3CD lacks polymerase activity. Protein 3CD binds to the 5'UTR of the viral genome. Functionally, replicates the viral genomic RNA on the surface of intracellular membranes. May form linear arrays of subunits that propagate along a strong head-to-tail interaction called interface-I. Covalently attaches UMP to a tyrosine of VPg, which is used to prime RNA synthesis. The positive stranded RNA genome is first replicated at virus induced membranous vesicles, creating a dsRNA genomic replication form. This dsRNA is then used as template to synthesize positive stranded RNA genomes. ss(+)RNA genomes are either translated, replicated or encapsidated. Major viral protease that mediates proteolytic processing of the polyprotein. Cleaves host EIF5B, contributing to host translation shutoff. Also cleaves host PABPC1, contributing to host translation shutoff. Cleaves host NLRP1, triggers host N-glycine-mediated degradation of the autoinhibitory NLRP1 N-terminal fragment. This is Genome polyprotein from Homo sapiens (Human).